The primary structure comprises 409 residues: N-acetylglucosamine-6-phosphate deacetylase (409 aa).

Glu-143 is an a divalent metal cation binding site. 154–155 is a binding site for substrate; the sequence is AH. The a divalent metal cation site is built by His-211 and His-232. Residues 235–236, Arg-243, and 269–272 each bind substrate; these read NA and DGIH. Residue Asp-294 is the Proton donor/acceptor of the active site. 328 to 330 is a binding site for substrate; sequence LSG.

It belongs to the metallo-dependent hydrolases superfamily. NagA family. Requires a divalent metal cation as cofactor.

The catalysed reaction is N-acetyl-D-glucosamine 6-phosphate + H2O = D-glucosamine 6-phosphate + acetate. The protein operates within amino-sugar metabolism; N-acetylneuraminate degradation. Its function is as follows. Hydrolyzes the N-glycolyl group from N-glycolylglucosamine 6-phosphate (GlcNGc-6-P) in the N-glycolylneuraminic acid (Neu5Gc) degradation pathway. The chain is N-acetylglucosamine-6-phosphate deacetylase (AMDHD2) from Bos taurus (Bovine).